The sequence spans 204 residues: tRNA (pseudouridine(54)-N(1))-methyltransferase (204 aa).

S-adenosyl-L-methionine contacts are provided by residues L130, G157, 180 to 185 (LSPLEL), and C190.

This sequence belongs to the methyltransferase superfamily. TrmY family. Homodimer.

The protein resides in the cytoplasm. The enzyme catalyses pseudouridine(54) in tRNA + S-adenosyl-L-methionine = N(1)-methylpseudouridine(54) in tRNA + S-adenosyl-L-homocysteine + H(+). Functionally, specifically catalyzes the N1-methylation of pseudouridine at position 54 (Psi54) in tRNAs. The polypeptide is tRNA (pseudouridine(54)-N(1))-methyltransferase (Methanococcus aeolicus (strain ATCC BAA-1280 / DSM 17508 / OCM 812 / Nankai-3)).